The following is a 37-amino-acid chain: Large ribosomal subunit protein bL36 (37 aa).

Belongs to the bacterial ribosomal protein bL36 family.

This is Large ribosomal subunit protein bL36 from Shewanella frigidimarina (strain NCIMB 400).